We begin with the raw amino-acid sequence, 344 residues long: Phosphoribosylformylglycinamidine cyclo-ligase (344 aa).

The protein belongs to the AIR synthase family.

It localises to the cytoplasm. The catalysed reaction is 2-formamido-N(1)-(5-O-phospho-beta-D-ribosyl)acetamidine + ATP = 5-amino-1-(5-phospho-beta-D-ribosyl)imidazole + ADP + phosphate + H(+). It functions in the pathway purine metabolism; IMP biosynthesis via de novo pathway; 5-amino-1-(5-phospho-D-ribosyl)imidazole from N(2)-formyl-N(1)-(5-phospho-D-ribosyl)glycinamide: step 2/2. This chain is Phosphoribosylformylglycinamidine cyclo-ligase, found in Neisseria meningitidis serogroup C (strain 053442).